The sequence spans 122 residues: Large ribosomal subunit protein uL14 (122 aa).

Belongs to the universal ribosomal protein uL14 family. Part of the 50S ribosomal subunit. Forms a cluster with proteins L3 and L19. In the 70S ribosome, L14 and L19 interact and together make contacts with the 16S rRNA in bridges B5 and B8.

In terms of biological role, binds to 23S rRNA. Forms part of two intersubunit bridges in the 70S ribosome. In Oleidesulfovibrio alaskensis (strain ATCC BAA-1058 / DSM 17464 / G20) (Desulfovibrio alaskensis), this protein is Large ribosomal subunit protein uL14.